The following is a 162-amino-acid chain: Peroxiredoxin-2D (162 aa).

Residues 4-162 (ITVGDVVPDG…SSAEDILKAL (159 aa)) enclose the Thioredoxin domain. Residue Cys-51 is the Cysteine sulfenic acid (-SOH) intermediate of the active site.

The protein belongs to the peroxiredoxin family. Prx5 subfamily. As to quaternary structure, monomer. Exclusively expressed in buds and flowers. Also detected in pollen.

Its subcellular location is the cytoplasm. The catalysed reaction is [glutaredoxin]-dithiol + a hydroperoxide = [glutaredoxin]-disulfide + an alcohol + H2O. In terms of biological role, thiol-specific peroxidase that catalyzes the reduction of hydrogen peroxide and organic hydroperoxides to water and alcohols, respectively. Plays a role in cell protection against oxidative stress by detoxifying peroxides. May be involved in intracellular redox signaling. This is Peroxiredoxin-2D (PRXIID) from Arabidopsis thaliana (Mouse-ear cress).